We begin with the raw amino-acid sequence, 211 residues long: Troponin I, cardiac muscle (211 aa).

The disordered stretch occupies residues 1–25 (MADESSDAAGEPQPAPAPVRRRSSA). Ala-2 is subject to N-acetylalanine. A phosphoserine mark is found at Ser-5 and Ser-6. 2 positions are modified to phosphoserine; by PKA and PKD/PRKD1: Ser-23 and Ser-24. At Tyr-27 the chain carries Phosphotyrosine. A Phosphothreonine; by STK4/MST1 modification is found at Thr-32. Residues 33–80 (EPHAKKKSKISASRKLQLKTLMLQIAKQEMEREAEERRGEKGRVLSTR) form an involved in binding TNC region. Ser-43 and Ser-45 each carry phosphoserine; by PKC/PRKCE. Thr-52 bears the Phosphothreonine; by STK4/MST1 mark. Phosphoserine is present on Ser-78. Residue Thr-79 is modified to Phosphothreonine. Phosphothreonine; by STK4/MST1 is present on residues Thr-130 and Thr-144. The involved in binding TNC and actin stretch occupies residues 130–151 (TQKIYDLRGKFKRPTLRRVRIS). The residue at position 151 (Ser-151) is a Phosphoserine; by PAK3. Phosphoserine is present on residues Ser-167 and Ser-200.

It belongs to the troponin I family. Interacts with TRIM63. Binds to actin and tropomyosin. Interacts with STK4/MST1. Post-translationally, phosphorylated at Ser-23 and Ser-24 by PRKD1; phosphorylation reduces myofilament calcium sensitivity. Phosphorylated preferentially at Thr-32. Phosphorylation by STK4/MST1 alters its binding affinity to TNNC1 (cardiac Tn-C) and TNNT2 (cardiac Tn-T). Phosphorylated at Ser-43 and Ser-45 by PRKCE; phosphorylation increases myocardium contractile dysfunction.

Troponin I is the inhibitory subunit of troponin, the thin filament regulatory complex which confers calcium-sensitivity to striated muscle actomyosin ATPase activity. This is Troponin I, cardiac muscle (Tnni3) from Rattus norvegicus (Rat).